A 308-amino-acid chain; its full sequence is Tetraacyldisaccharide 4'-kinase (308 aa).

63-70 (SFGGNGKT) is an ATP binding site.

This sequence belongs to the LpxK family.

It catalyses the reaction a lipid A disaccharide + ATP = a lipid IVA + ADP + H(+). It participates in glycolipid biosynthesis; lipid IV(A) biosynthesis; lipid IV(A) from (3R)-3-hydroxytetradecanoyl-[acyl-carrier-protein] and UDP-N-acetyl-alpha-D-glucosamine: step 6/6. Functionally, transfers the gamma-phosphate of ATP to the 4'-position of a tetraacyldisaccharide 1-phosphate intermediate (termed DS-1-P) to form tetraacyldisaccharide 1,4'-bis-phosphate (lipid IVA). The sequence is that of Tetraacyldisaccharide 4'-kinase from Campylobacter jejuni (strain RM1221).